Consider the following 169-residue polypeptide: Protein Flattop homolog (169 aa).

Residues 53–169 (IPRSSRSPWG…SPKLATPEPC (117 aa)) are disordered. Over residues 119–130 (VQASPRNASPLQ) the composition is skewed to polar residues.

It belongs to the Flattop family.

It is found in the cytoplasm. The protein localises to the cytoskeleton. The protein resides in the cilium basal body. Its subcellular location is the cell projection. It localises to the cilium. It is found in the apical cell membrane. Its function is as follows. Acts as a regulator of cilium basal body docking and positioning in mono- and multiciliated cells. The sequence is that of Protein Flattop homolog from Nematostella vectensis (Starlet sea anemone).